The sequence spans 341 residues: S-adenosylmethionine:tRNA ribosyltransferase-isomerase (341 aa).

The protein belongs to the QueA family. As to quaternary structure, monomer.

Its subcellular location is the cytoplasm. The catalysed reaction is 7-aminomethyl-7-carbaguanosine(34) in tRNA + S-adenosyl-L-methionine = epoxyqueuosine(34) in tRNA + adenine + L-methionine + 2 H(+). Its pathway is tRNA modification; tRNA-queuosine biosynthesis. In terms of biological role, transfers and isomerizes the ribose moiety from AdoMet to the 7-aminomethyl group of 7-deazaguanine (preQ1-tRNA) to give epoxyqueuosine (oQ-tRNA). This chain is S-adenosylmethionine:tRNA ribosyltransferase-isomerase, found in Desulfitobacterium hafniense (strain DSM 10664 / DCB-2).